Reading from the N-terminus, the 302-residue chain is ATP synthase mitochondrial F1 complex assembly factor 1 (302 aa).

This sequence belongs to the ATP11 family. Interacts with ATP5F1B; involved in the assembly of the F1 component of the mitochondrial ATP synthase (ATPase).

It is found in the mitochondrion inner membrane. Functionally, has a complex stabilizing activity in the assembly of the mitochondrial F1-F0 complex. This is ATP synthase mitochondrial F1 complex assembly factor 1 (atpaf1) from Danio rerio (Zebrafish).